The primary structure comprises 387 residues: Flap endonuclease 1 (387 aa).

The segment at 1–104 (MGILGLSKLI…GELAKRAERR (104 aa)) is N-domain. Asp-34 is a Mg(2+) binding site. DNA contacts are provided by Arg-47 and Arg-70. Positions 86, 158, 160, 179, and 181 each coordinate Mg(2+). The interval 122-253 (GIEKFNRRLV…KRAIELINNY (132 aa)) is I-domain. DNA is bound at residue Glu-158. Gly-231 and Asp-233 together coordinate DNA. Asp-233 contacts Mg(2+). An interaction with PCNA region spans residues 336 to 344 (TQVRLDSFF). Positions 346 to 387 (TLPSTPNATNAAKRKAEEAKKSANNKKAKTSGGVGGRGRRPK) are disordered.

This sequence belongs to the XPG/RAD2 endonuclease family. FEN1 subfamily. In terms of assembly, interacts with PCNA. Three molecules of FEN1 bind to one PCNA trimer with each molecule binding to one PCNA monomer. PCNA stimulates the nuclease activity without altering cleavage specificity. Requires Mg(2+) as cofactor. In terms of processing, phosphorylated. Phosphorylation upon DNA damage induces relocalization to the nuclear plasma.

The protein localises to the nucleus. Its subcellular location is the nucleolus. It localises to the nucleoplasm. The protein resides in the mitochondrion. Structure-specific nuclease with 5'-flap endonuclease and 5'-3' exonuclease activities involved in DNA replication and repair. During DNA replication, cleaves the 5'-overhanging flap structure that is generated by displacement synthesis when DNA polymerase encounters the 5'-end of a downstream Okazaki fragment. It enters the flap from the 5'-end and then tracks to cleave the flap base, leaving a nick for ligation. Also involved in the long patch base excision repair (LP-BER) pathway, by cleaving within the apurinic/apyrimidinic (AP) site-terminated flap. Acts as a genome stabilization factor that prevents flaps from equilibrating into structures that lead to duplications and deletions. Also possesses 5'-3' exonuclease activity on nicked or gapped double-stranded DNA, and exhibits RNase H activity. Also involved in replication and repair of rDNA and in repairing mitochondrial DNA. The sequence is that of Flap endonuclease 1 from Drosophila erecta (Fruit fly).